Reading from the N-terminus, the 602-residue chain is Spermidine-citrate ligase (602 aa).

ATP-binding positions include 286–288 (SLR), K300, and R312.

It belongs to the IucA/IucC family.

The catalysed reaction is spermidine + citrate + ATP = N(8)-citryl-spermidine + AMP + diphosphate + H(+). It participates in siderophore biosynthesis; petrobactin biosynthesis. Involved in the biosynthesis of petrobactin, a catecholate siderophore that functions in both iron acquisition and virulence. Catalyzes the ATP-dependent condensation of citric acid and spermidine to form N(8)-citryl-spermidine. It can also catalyze the condensation of several di- and triamine analogs of spermidine with citric acid and the condensation of the citric acid analog tricarballylic acid with spermidine. Required for growth in iron-depleted medium and for full virulence in a mouse model of infection. This Bacillus anthracis protein is Spermidine-citrate ligase.